A 182-amino-acid chain; its full sequence is Adenylate kinase (182 aa).

12–17 (GAGKGT) provides a ligand contact to ATP. Residues 32 to 61 (STGELLRKEIEMNTALGIQVKDIMNRGELV) form an NMP region. AMP contacts are provided by residues Thr-33, Arg-38, 59 to 61 (ELV), 85 to 88 (GYPR), and Gln-92. Residues 126–132 (LRGRKDD) form an LID region. Arg-127 contributes to the ATP binding site. The AMP site is built by Arg-129 and Arg-140. ATP is bound at residue Arg-168.

The protein belongs to the adenylate kinase family. In terms of assembly, monomer.

It is found in the cytoplasm. It catalyses the reaction AMP + ATP = 2 ADP. The protein operates within purine metabolism; AMP biosynthesis via salvage pathway; AMP from ADP: step 1/1. In terms of biological role, catalyzes the reversible transfer of the terminal phosphate group between ATP and AMP. Plays an important role in cellular energy homeostasis and in adenine nucleotide metabolism. In Prochlorococcus marinus (strain MIT 9301), this protein is Adenylate kinase.